The following is a 70-amino-acid chain: Large ribosomal subunit protein bL31 (70 aa).

Zn(2+) contacts are provided by C16, C18, C38, and C41.

This sequence belongs to the bacterial ribosomal protein bL31 family. Type A subfamily. In terms of assembly, part of the 50S ribosomal subunit. The cofactor is Zn(2+).

Its function is as follows. Binds the 23S rRNA. The chain is Large ribosomal subunit protein bL31 from Bifidobacterium adolescentis (strain ATCC 15703 / DSM 20083 / NCTC 11814 / E194a).